Here is a 431-residue protein sequence, read N- to C-terminus: Tol-Pal system protein TolB (431 aa).

The signal sequence occupies residues 1 to 19; that stretch reads MKRLLFFLICVFFSKTSYS.

Belongs to the TolB family. In terms of assembly, the Tol-Pal system is composed of five core proteins: the inner membrane proteins TolA, TolQ and TolR, the periplasmic protein TolB and the outer membrane protein Pal. They form a network linking the inner and outer membranes and the peptidoglycan layer.

It is found in the periplasm. Part of the Tol-Pal system, which plays a role in outer membrane invagination during cell division and is important for maintaining outer membrane integrity. TolB occupies a key intermediary position in the Tol-Pal system because it communicates directly with both membrane-embedded components, Pal in the outer membrane and TolA in the inner membrane. This Wigglesworthia glossinidia brevipalpis protein is Tol-Pal system protein TolB.